The chain runs to 140 residues: Transcription antitermination protein NusB (140 aa).

It belongs to the NusB family.

In terms of biological role, involved in transcription antitermination. Required for transcription of ribosomal RNA (rRNA) genes. Binds specifically to the boxA antiterminator sequence of the ribosomal RNA (rrn) operons. The protein is Transcription antitermination protein NusB of Leptospira biflexa serovar Patoc (strain Patoc 1 / Ames).